A 338-amino-acid polypeptide reads, in one-letter code: MERLLDNKFSIEDVHEESLRPKTLEDYIGQQKVKEKIKIFIEAAKKRKEPLDHVLLYGPPGLGKTTLANIIANEMGVDIKVTSGPAIERAGDLVAILTNIGENNILFIDEIHRLNRTIEEVLYPAMEDKKVDIVIGKGPSAKTIRLTLPPFTLIGATTRAGLLSSPLRDRFGIIERLDYYTVEELSQIVMRSASILKCDIEKEACIEIAKRSRGTPRVANRLLRRLRDYAMVKHTGSITYEVAKSGLEMFEVDEYGLDLVDRNILEAIVYKFGGGPVGLSTIAAAIGEDEGTIEDIYEPYLIQEGFLVKTARGRVATQKAINHIAKIKFNVKESGDKR.

Residues Met1–Tyr180 are large ATPase domain (RuvB-L). ATP is bound by residues Leu19, Arg20, Gly61, Lys64, Thr65, Thr66, Arg170, Tyr180, and Arg217. Thr65 lines the Mg(2+) pocket. Positions Thr181 to Glu251 are small ATPAse domain (RuvB-S). The tract at residues Glu254–Arg338 is head domain (RuvB-H). 2 residues coordinate DNA: Lys309 and Arg314.

It belongs to the RuvB family. As to quaternary structure, homohexamer. Forms an RuvA(8)-RuvB(12)-Holliday junction (HJ) complex. HJ DNA is sandwiched between 2 RuvA tetramers; dsDNA enters through RuvA and exits via RuvB. An RuvB hexamer assembles on each DNA strand where it exits the tetramer. Each RuvB hexamer is contacted by two RuvA subunits (via domain III) on 2 adjacent RuvB subunits; this complex drives branch migration. In the full resolvosome a probable DNA-RuvA(4)-RuvB(12)-RuvC(2) complex forms which resolves the HJ.

It localises to the cytoplasm. It catalyses the reaction ATP + H2O = ADP + phosphate + H(+). Its function is as follows. The RuvA-RuvB-RuvC complex processes Holliday junction (HJ) DNA during genetic recombination and DNA repair, while the RuvA-RuvB complex plays an important role in the rescue of blocked DNA replication forks via replication fork reversal (RFR). RuvA specifically binds to HJ cruciform DNA, conferring on it an open structure. The RuvB hexamer acts as an ATP-dependent pump, pulling dsDNA into and through the RuvAB complex. RuvB forms 2 homohexamers on either side of HJ DNA bound by 1 or 2 RuvA tetramers; 4 subunits per hexamer contact DNA at a time. Coordinated motions by a converter formed by DNA-disengaged RuvB subunits stimulates ATP hydrolysis and nucleotide exchange. Immobilization of the converter enables RuvB to convert the ATP-contained energy into a lever motion, pulling 2 nucleotides of DNA out of the RuvA tetramer per ATP hydrolyzed, thus driving DNA branch migration. The RuvB motors rotate together with the DNA substrate, which together with the progressing nucleotide cycle form the mechanistic basis for DNA recombination by continuous HJ branch migration. Branch migration allows RuvC to scan DNA until it finds its consensus sequence, where it cleaves and resolves cruciform DNA. The sequence is that of Holliday junction branch migration complex subunit RuvB from Caldicellulosiruptor saccharolyticus (strain ATCC 43494 / DSM 8903 / Tp8T 6331).